The sequence spans 133 residues: Profilin (133 aa).

The protein belongs to the profilin family.

Functionally, more likely to influence phosphoinositide metabolism than actin assembly. This chain is Profilin, found in Vaccinia virus (strain Tian Tan) (VACV).